A 260-amino-acid chain; its full sequence is MLKTRIIPCLDVKDGRVVKGVNFVALRDAGDPVEQARAYDAAGADELMFLDITASSDNRGLLLDVISRTAEVCFMPVSVGGGVRQVSDMRRLLLAGADKVSVNTAAVENPDLVAAGADAFGAQCVVVAIDAKARGDGSGWNVWTYGGRKDTGIDVVDWAAKVVERGAGEILLTSMDRDGAKIGYDIPLLKAVTGAVTVPVIASGGAGTTDHLVEAARDGHAAAVLAASIFHFGEISIGQAKRAMADAGIPVRLDTLKGAA.

Catalysis depends on residues aspartate 11 and aspartate 130.

Belongs to the HisA/HisF family. As to quaternary structure, heterodimer of HisH and HisF.

It is found in the cytoplasm. It carries out the reaction 5-[(5-phospho-1-deoxy-D-ribulos-1-ylimino)methylamino]-1-(5-phospho-beta-D-ribosyl)imidazole-4-carboxamide + L-glutamine = D-erythro-1-(imidazol-4-yl)glycerol 3-phosphate + 5-amino-1-(5-phospho-beta-D-ribosyl)imidazole-4-carboxamide + L-glutamate + H(+). Its pathway is amino-acid biosynthesis; L-histidine biosynthesis; L-histidine from 5-phospho-alpha-D-ribose 1-diphosphate: step 5/9. IGPS catalyzes the conversion of PRFAR and glutamine to IGP, AICAR and glutamate. The HisF subunit catalyzes the cyclization activity that produces IGP and AICAR from PRFAR using the ammonia provided by the HisH subunit. The chain is Imidazole glycerol phosphate synthase subunit HisF from Caulobacter sp. (strain K31).